The sequence spans 209 residues: ATP-dependent dethiobiotin synthetase BioD (209 aa).

13-18 (DIGKTV) contacts ATP. Thr-17 is a binding site for Mg(2+). Residue Lys-33 is part of the active site. Mg(2+) contacts are provided by Arg-47 and Glu-100. Residues 100 to 103 (EGAG) and 184 to 186 (PRL) contribute to the ATP site.

Belongs to the dethiobiotin synthetase family. In terms of assembly, homodimer. It depends on Mg(2+) as a cofactor.

The protein localises to the cytoplasm. It carries out the reaction (7R,8S)-7,8-diammoniononanoate + CO2 + ATP = (4R,5S)-dethiobiotin + ADP + phosphate + 3 H(+). It participates in cofactor biosynthesis; biotin biosynthesis; biotin from 7,8-diaminononanoate: step 1/2. Catalyzes a mechanistically unusual reaction, the ATP-dependent insertion of CO2 between the N7 and N8 nitrogen atoms of 7,8-diaminopelargonic acid (DAPA, also called 7,8-diammoniononanoate) to form a ureido ring. In Rhodopseudomonas palustris (strain BisB18), this protein is ATP-dependent dethiobiotin synthetase BioD.